Consider the following 427-residue polypeptide: Serine hydroxymethyltransferase (427 aa).

Residues Leu-118 and 122 to 124 (GHL) each bind (6S)-5,6,7,8-tetrahydrofolate. Position 227 is an N6-(pyridoxal phosphate)lysine (Lys-227). Residues Glu-243 and 351-353 (SPF) contribute to the (6S)-5,6,7,8-tetrahydrofolate site.

This sequence belongs to the SHMT family. In terms of assembly, homodimer. Pyridoxal 5'-phosphate is required as a cofactor.

The protein localises to the cytoplasm. The enzyme catalyses (6R)-5,10-methylene-5,6,7,8-tetrahydrofolate + glycine + H2O = (6S)-5,6,7,8-tetrahydrofolate + L-serine. Its pathway is one-carbon metabolism; tetrahydrofolate interconversion. The protein operates within amino-acid biosynthesis; glycine biosynthesis; glycine from L-serine: step 1/1. Catalyzes the reversible interconversion of serine and glycine with tetrahydrofolate (THF) serving as the one-carbon carrier. This reaction serves as the major source of one-carbon groups required for the biosynthesis of purines, thymidylate, methionine, and other important biomolecules. Also exhibits THF-independent aldolase activity toward beta-hydroxyamino acids, producing glycine and aldehydes, via a retro-aldol mechanism. The polypeptide is Serine hydroxymethyltransferase (Thermotoga maritima (strain ATCC 43589 / DSM 3109 / JCM 10099 / NBRC 100826 / MSB8)).